Reading from the N-terminus, the 411-residue chain is 4-coumarate--CoA ligase (411 aa).

The protein belongs to the ATP-dependent AMP-binding enzyme family.

The enzyme catalyses (E)-4-coumarate + ATP + CoA = (E)-4-coumaroyl-CoA + AMP + diphosphate. Its function is as follows. Converts p-coumaric acid into p-coumaryl CoA. This is necessary for the activation of the photoactive yellow protein (PYP) chromophore. The chain is 4-coumarate--CoA ligase (pcl) from Cereibacter sphaeroides (strain ATCC 17023 / DSM 158 / JCM 6121 / CCUG 31486 / LMG 2827 / NBRC 12203 / NCIMB 8253 / ATH 2.4.1.) (Rhodobacter sphaeroides).